Reading from the N-terminus, the 479-residue chain is Ribulose bisphosphate carboxylase large chain (479 aa).

The propeptide occupies 1–2 (MS). Substrate is bound by residues Asn123 and Thr173. The active-site Proton acceptor is Lys175. Position 177 (Lys177) interacts with substrate. Lys201, Asp203, and Glu204 together coordinate Mg(2+). N6-carboxylysine is present on Lys201. Ser208 carries the post-translational modification Phosphoserine. Catalysis depends on His294, which acts as the Proton acceptor. Substrate contacts are provided by Arg295 and His327. The residue at position 330 (Thr330) is a Phosphothreonine. Ser379 lines the substrate pocket.

The protein belongs to the RuBisCO large chain family. Type I subfamily. Heterohexadecamer of 8 large chains and 8 small chains; disulfide-linked. The disulfide link is formed within the large subunit homodimers. Requires Mg(2+) as cofactor. In terms of processing, the disulfide bond which can form in the large chain dimeric partners within the hexadecamer appears to be associated with oxidative stress and protein turnover.

The protein localises to the plastid. The protein resides in the chloroplast. The catalysed reaction is 2 (2R)-3-phosphoglycerate + 2 H(+) = D-ribulose 1,5-bisphosphate + CO2 + H2O. The enzyme catalyses D-ribulose 1,5-bisphosphate + O2 = 2-phosphoglycolate + (2R)-3-phosphoglycerate + 2 H(+). Functionally, ruBisCO catalyzes two reactions: the carboxylation of D-ribulose 1,5-bisphosphate, the primary event in carbon dioxide fixation, as well as the oxidative fragmentation of the pentose substrate in the photorespiration process. Both reactions occur simultaneously and in competition at the same active site. In Capsella bursa-pastoris (Shepherd's purse), this protein is Ribulose bisphosphate carboxylase large chain.